The primary structure comprises 389 residues: Geranylgeranyl pyrophosphate synthase A (389 aa).

Positions 99, 102, and 131 each coordinate isopentenyl diphosphate. Residues D138 and D142 each coordinate Mg(2+). R147 is a binding site for dimethylallyl diphosphate. Residue R148 coordinates isopentenyl diphosphate.

The protein belongs to the FPP/GGPP synthase family. The cofactor is Mg(2+).

The protein resides in the cytoplasm. The catalysed reaction is isopentenyl diphosphate + (2E)-geranyl diphosphate = (2E,6E)-farnesyl diphosphate + diphosphate. It carries out the reaction isopentenyl diphosphate + (2E,6E)-farnesyl diphosphate = (2E,6E,10E)-geranylgeranyl diphosphate + diphosphate. The protein operates within isoprenoid biosynthesis; farnesyl diphosphate biosynthesis; farnesyl diphosphate from geranyl diphosphate and isopentenyl diphosphate: step 1/1. It participates in isoprenoid biosynthesis; geranylgeranyl diphosphate biosynthesis; geranylgeranyl diphosphate from farnesyl diphosphate and isopentenyl diphosphate: step 1/1. Catalyzes the trans-addition of the 2 molecules of isopentenyl diphosphate (IPP) onto geranyl diphosphate (GDP) to form geranylgeranyl pyrophosphate (GGDP). Does not catalyze the conversion of dimethylallyl diphosphate (DMAPP). The polypeptide is Geranylgeranyl pyrophosphate synthase A (GGS-A) (Phomopsis amygdali (Fusicoccum amygdali)).